The primary structure comprises 254 residues: Thiazole synthase (254 aa).

Lysine 95 (schiff-base intermediate with DXP) is an active-site residue. Residues glycine 156, 182–183 (AG), and 204–205 (NT) contribute to the 1-deoxy-D-xylulose 5-phosphate site.

The protein belongs to the ThiG family. As to quaternary structure, homotetramer. Forms heterodimers with either ThiH or ThiS.

The protein resides in the cytoplasm. It catalyses the reaction [ThiS sulfur-carrier protein]-C-terminal-Gly-aminoethanethioate + 2-iminoacetate + 1-deoxy-D-xylulose 5-phosphate = [ThiS sulfur-carrier protein]-C-terminal Gly-Gly + 2-[(2R,5Z)-2-carboxy-4-methylthiazol-5(2H)-ylidene]ethyl phosphate + 2 H2O + H(+). It functions in the pathway cofactor biosynthesis; thiamine diphosphate biosynthesis. Catalyzes the rearrangement of 1-deoxy-D-xylulose 5-phosphate (DXP) to produce the thiazole phosphate moiety of thiamine. Sulfur is provided by the thiocarboxylate moiety of the carrier protein ThiS. In vitro, sulfur can be provided by H(2)S. The polypeptide is Thiazole synthase (Shewanella sp. (strain W3-18-1)).